The primary structure comprises 437 residues: Xylose isomerase (437 aa).

Active-site residues include H101 and D104. 7 residues coordinate Mg(2+): E232, E268, H271, D296, D307, D309, and D339.

This sequence belongs to the xylose isomerase family. As to quaternary structure, homotetramer. Requires Mg(2+) as cofactor.

The protein resides in the cytoplasm. It catalyses the reaction alpha-D-xylose = alpha-D-xylulofuranose. This is Xylose isomerase from Actinobacillus succinogenes (strain ATCC 55618 / DSM 22257 / CCUG 43843 / 130Z).